A 120-amino-acid chain; its full sequence is Aspartate 1-decarboxylase (120 aa).

Catalysis depends on Ser-25, which acts as the Schiff-base intermediate with substrate; via pyruvic acid. Ser-25 bears the Pyruvic acid (Ser) mark. A substrate-binding site is contributed by Thr-57. The active-site Proton donor is Tyr-58. 73-75 contacts substrate; it reads GAA.

It belongs to the PanD family. Heterooctamer of four alpha and four beta subunits. Requires pyruvate as cofactor. Post-translationally, is synthesized initially as an inactive proenzyme, which is activated by self-cleavage at a specific serine bond to produce a beta-subunit with a hydroxyl group at its C-terminus and an alpha-subunit with a pyruvoyl group at its N-terminus.

It is found in the cytoplasm. The enzyme catalyses L-aspartate + H(+) = beta-alanine + CO2. It participates in cofactor biosynthesis; (R)-pantothenate biosynthesis; beta-alanine from L-aspartate: step 1/1. Catalyzes the pyruvoyl-dependent decarboxylation of aspartate to produce beta-alanine. The chain is Aspartate 1-decarboxylase from Polynucleobacter asymbioticus (strain DSM 18221 / CIP 109841 / QLW-P1DMWA-1) (Polynucleobacter necessarius subsp. asymbioticus).